Here is a 461-residue protein sequence, read N- to C-terminus: Bacterial E1-like protein BilD (461 aa).

The active-site Glycyl thioester intermediate is the C385.

In terms of biological role, component of the Bil (bacterial ISG15-like) antiviral defense system, composed of BilA, BilB, BilC and BilD. The Bil system specifically conjugates a ubiquitin-like moiety (bilA) to the bacteriophage central tail fiber (CTF, or tip attachment protein J) via reactions involving E1 (bilD) and E2 (bilB). Modifies CTF of phage SECphi27 and SECphi4, which probably interferes with assembly of the phage tail. Also modifies T5 baseplate hub protein pb3 (gene D16), but not gp27 of phage T6 (Bil defends against T6). BilD (E1) catalyzes the first step in conjugation. Activates ubiquitin-like BilA by first adenylating its C-terminal glycine residue with ATP, and then conjugates it to the side chain of a cysteine residue in E1 (this protein), yielding a ubiquitin-E1 thioester and free AMP. Bil-encoding bacteria produce mostly defective phage SECphi27, many of which have phage assembly defects, including no tails. SECphi27 phage progeny produced in E.coli with the Bil system inject less DNA into naive host cells, maybe because the phage are less able to adsorb and inject their DNA into host cells. Expression of the Bil system in E.coli (strain MG1655) confers about 100-fold resistance to phage SECphi27, SECphi18, SECphi6, SECphi4 and T5, but not to SECphi17. When cells expressing the Bil system are infected by phage SECphi27 at low multiplicity of infection (0.03 MOI) the culture survives, at 3.0 MOI the culture collapses at the same time as cells without the Bil system. This Collimonas sp. (strain OK412) protein is Bacterial E1-like protein BilD.